Consider the following 362-residue polypeptide: 3-isopropylmalate dehydrogenase (362 aa).

78 to 91 (GPKWETLPPDEQPE) is a binding site for NAD(+). Substrate is bound by residues arginine 99, arginine 109, arginine 138, and aspartate 227. Mg(2+)-binding residues include aspartate 227, aspartate 251, and aspartate 255. Residue 285–297 (GSAPDIAGQGIAN) participates in NAD(+) binding.

This sequence belongs to the isocitrate and isopropylmalate dehydrogenases family. LeuB type 1 subfamily. In terms of assembly, homodimer. Mg(2+) is required as a cofactor. It depends on Mn(2+) as a cofactor.

It localises to the cytoplasm. The catalysed reaction is (2R,3S)-3-isopropylmalate + NAD(+) = 4-methyl-2-oxopentanoate + CO2 + NADH. It functions in the pathway amino-acid biosynthesis; L-leucine biosynthesis; L-leucine from 3-methyl-2-oxobutanoate: step 3/4. Catalyzes the oxidation of 3-carboxy-2-hydroxy-4-methylpentanoate (3-isopropylmalate) to 3-carboxy-4-methyl-2-oxopentanoate. The product decarboxylates to 4-methyl-2 oxopentanoate. In Geobacter metallireducens (strain ATCC 53774 / DSM 7210 / GS-15), this protein is 3-isopropylmalate dehydrogenase.